A 360-amino-acid chain; its full sequence is BLOC-1-related complex subunit 6 (360 aa).

The disordered stretch occupies residues 1–201 (MEAAQGRLGP…TGAGGGRRAT (201 aa)). Residues 23–33 (ATFSGRPSRTP) are compositionally biased toward polar residues. Threonine 41 is modified (phosphothreonine). The residue at position 130 (serine 130) is a Phosphoserine. Over residues 144–155 (EGDDDDDEDEEA) the composition is skewed to acidic residues. A Phosphoserine modification is found at serine 173. Positions 179 to 198 (GACGGGGSSSSGETGAGGGR) are enriched in gly residues. At threonine 201 the chain carries Phosphothreonine. Phosphoserine is present on serine 204.

The protein belongs to the BORCS6 family. As to quaternary structure, component of the BLOC-one-related complex (BORC) which is composed of BLOC1S1, BLOC1S2, BORCS5, BORCS6, BORCS7, BORCS8, KXD1 and SNAPIN.

Its subcellular location is the lysosome membrane. Functionally, as part of the BORC complex may play a role in lysosomes movement and localization at the cell periphery. Associated with the cytosolic face of lysosomes, the BORC complex may recruit ARL8B and couple lysosomes to microtubule plus-end-directed kinesin motor. In Mus musculus (Mouse), this protein is BLOC-1-related complex subunit 6.